The primary structure comprises 191 residues: GDP-mannose pyrophosphatase (191 aa).

Residues Tyr-17, 38–40 (KRE), Arg-67, and 85–87 (AGL) each bind GDP-alpha-D-mannose. The 138-residue stretch at 43–180 (DRGNGATILL…EIRDGKTVLL (138 aa)) folds into the Nudix hydrolase domain. Positions 85, 100, and 104 each coordinate Mg(2+). The Nudix box signature appears at 86–106 (GLLDNDEPEVCIRKEAIEETG). GDP-alpha-D-mannose contacts are provided by residues Glu-104, Glu-127, 150 to 151 (DE), and Lys-176. Glu-151 is a Mg(2+) binding site.

It belongs to the Nudix hydrolase family. NudK subfamily. As to quaternary structure, homodimer. Requires Mg(2+) as cofactor.

It carries out the reaction GDP-alpha-D-mannose + H2O = alpha-D-mannose 1-phosphate + GMP + 2 H(+). Functionally, nucleoside diphosphate sugar hydrolase that hydrolyzes GDP-mannose as its preferred substrate, yielding GMP and mannose-1-phosphate. The sequence is that of GDP-mannose pyrophosphatase (nudK) from Salmonella choleraesuis (strain SC-B67).